The following is a 464-amino-acid chain: Siroheme synthase (464 aa).

The precorrin-2 dehydrogenase /sirohydrochlorin ferrochelatase stretch occupies residues 1-203 (MEFLPLFHNL…GQGDEAERLL (203 aa)). Residues 22-23 (EI) and 43-44 (PQ) contribute to the NAD(+) site. Ser128 bears the Phosphoserine mark. The interval 216-464 (GEVYLVGAGP…KWFEGAQSQV (249 aa)) is uroporphyrinogen-III C-methyltransferase. Pro225 is a binding site for S-adenosyl-L-methionine. The Proton acceptor role is filled by Asp248. The active-site Proton donor is the Lys270. S-adenosyl-L-methionine is bound by residues 301 to 303 (GGD), Ile306, 331 to 332 (TA), Met383, and Gly412.

The protein in the N-terminal section; belongs to the precorrin-2 dehydrogenase / sirohydrochlorin ferrochelatase family. It in the C-terminal section; belongs to the precorrin methyltransferase family.

The catalysed reaction is uroporphyrinogen III + 2 S-adenosyl-L-methionine = precorrin-2 + 2 S-adenosyl-L-homocysteine + H(+). It catalyses the reaction precorrin-2 + NAD(+) = sirohydrochlorin + NADH + 2 H(+). The enzyme catalyses siroheme + 2 H(+) = sirohydrochlorin + Fe(2+). It participates in cofactor biosynthesis; adenosylcobalamin biosynthesis; precorrin-2 from uroporphyrinogen III: step 1/1. Its pathway is cofactor biosynthesis; adenosylcobalamin biosynthesis; sirohydrochlorin from precorrin-2: step 1/1. The protein operates within porphyrin-containing compound metabolism; siroheme biosynthesis; precorrin-2 from uroporphyrinogen III: step 1/1. It functions in the pathway porphyrin-containing compound metabolism; siroheme biosynthesis; siroheme from sirohydrochlorin: step 1/1. It participates in porphyrin-containing compound metabolism; siroheme biosynthesis; sirohydrochlorin from precorrin-2: step 1/1. Functionally, multifunctional enzyme that catalyzes the SAM-dependent methylations of uroporphyrinogen III at position C-2 and C-7 to form precorrin-2 via precorrin-1. Then it catalyzes the NAD-dependent ring dehydrogenation of precorrin-2 to yield sirohydrochlorin. Finally, it catalyzes the ferrochelation of sirohydrochlorin to yield siroheme. The polypeptide is Siroheme synthase (Pseudomonas fluorescens (strain SBW25)).